A 367-amino-acid chain; its full sequence is 2-aminoethylphosphonate--pyruvate transaminase (367 aa).

N6-(pyridoxal phosphate)lysine is present on Lys194.

The protein belongs to the class-V pyridoxal-phosphate-dependent aminotransferase family. PhnW subfamily. As to quaternary structure, homodimer. It depends on pyridoxal 5'-phosphate as a cofactor.

It catalyses the reaction (2-aminoethyl)phosphonate + pyruvate = phosphonoacetaldehyde + L-alanine. Functionally, involved in phosphonate degradation. This is 2-aminoethylphosphonate--pyruvate transaminase from Klebsiella pneumoniae subsp. pneumoniae (strain ATCC 700721 / MGH 78578).